We begin with the raw amino-acid sequence, 68 residues long: uncharacterized protein (68 aa).

The disordered stretch occupies residues 1–20 (MYKQKKKNHPFQCKKKKKKK). The chain crosses the membrane as a helical span at residues 27 to 44 (IKLLFNYFLFFNFIITTF).

The protein resides in the membrane. This is an uncharacterized protein from Dictyostelium discoideum (Social amoeba).